A 140-amino-acid polypeptide reads, in one-letter code: Large ribosomal subunit protein uL11 (140 aa).

Belongs to the universal ribosomal protein uL11 family. In terms of assembly, part of the ribosomal stalk of the 50S ribosomal subunit. Interacts with L10 and the large rRNA to form the base of the stalk. L10 forms an elongated spine to which L12 dimers bind in a sequential fashion forming a multimeric L10(L12)X complex. In terms of processing, one or more lysine residues are methylated.

Forms part of the ribosomal stalk which helps the ribosome interact with GTP-bound translation factors. The polypeptide is Large ribosomal subunit protein uL11 (Campylobacter hominis (strain ATCC BAA-381 / DSM 21671 / CCUG 45161 / LMG 19568 / NCTC 13146 / CH001A)).